We begin with the raw amino-acid sequence, 108 residues long: MSDTEYLARAEAVLAAVERTVDAANDGDHDIDLERNGSVLTLTFENGSKIIVNLQPPMKELWIAAKAGGFHYRFVDGEWRDTRTGTEFFSALTDYATQQAGLPITFRA.

The protein belongs to the frataxin family.

In terms of biological role, involved in iron-sulfur (Fe-S) cluster assembly. May act as a regulator of Fe-S biogenesis. This is Iron-sulfur cluster assembly protein CyaY from Burkholderia vietnamiensis (strain G4 / LMG 22486) (Burkholderia cepacia (strain R1808)).